We begin with the raw amino-acid sequence, 186 residues long: Ribosome-recycling factor (186 aa).

Belongs to the RRF family.

The protein resides in the cytoplasm. Functionally, responsible for the release of ribosomes from messenger RNA at the termination of protein biosynthesis. May increase the efficiency of translation by recycling ribosomes from one round of translation to another. The sequence is that of Ribosome-recycling factor from Bacteroides fragilis (strain ATCC 25285 / DSM 2151 / CCUG 4856 / JCM 11019 / LMG 10263 / NCTC 9343 / Onslow / VPI 2553 / EN-2).